Consider the following 396-residue polypeptide: L-lactate dehydrogenase (396 aa).

One can recognise an FMN hydroxy acid dehydrogenase domain in the interval 1–380 (MIISAASDYR…TQDSLVQGLG (380 aa)). Position 24 (Tyr24) interacts with substrate. FMN-binding residues include Ser106 and Gln127. Residue Tyr129 participates in substrate binding. Residue Thr155 coordinates FMN. A substrate-binding site is contributed by Arg164. Lys251 contacts FMN. His275 serves as the catalytic Proton acceptor. Arg278 is a substrate binding site. Residue 306 to 330 (DSGIRNGLDVVRMIALGADTILLGR) coordinates FMN.

This sequence belongs to the FMN-dependent alpha-hydroxy acid dehydrogenase family. FMN serves as cofactor.

The protein resides in the cell inner membrane. It carries out the reaction (S)-lactate + A = pyruvate + AH2. Functionally, catalyzes the conversion of L-lactate to pyruvate. Is coupled to the respiratory chain. The protein is L-lactate dehydrogenase of Escherichia coli O81 (strain ED1a).